The sequence spans 240 residues: RING finger protein 151 (240 aa).

Residues 20-58 (CSVCHGVLKRPVRLPCSHIFCKKCILRWLARQKTCPCCR) form an RING-type zinc finger. The TRAF-type zinc finger occupies 101–156 (GHQDSCPFELMVCPNEGCMLRVPRGALDEHRQNCQHGAYHRCSLGCGATLGPVERA).

The sequence is that of RING finger protein 151 (RNF151) from Bos taurus (Bovine).